Here is a 261-residue protein sequence, read N- to C-terminus: Cytochrome c oxidase subunit 3 (261 aa).

The Mitochondrial matrix portion of the chain corresponds to 1–15 (MTHQTHAYHMVNPSP). A helical membrane pass occupies residues 16–34 (WPLTGALSALLMTSGLIMW). At 35–40 (FHYNSM) the chain is on the mitochondrial intermembrane side. A helical transmembrane segment spans residues 41 to 66 (SLLTLGFTTNLLTMYQWWRDVIREGT). Residues 67-72 (FQGHHT) lie on the Mitochondrial matrix side of the membrane. The helical transmembrane segment at 73–105 (PIVQKGLRYGMVLFIVSEVFFFAGFFWAFYHSS) threads the bilayer. Residues 106–128 (LAPTPELGGCWPPTGIIPLNPLE) lie on the Mitochondrial intermembrane side of the membrane. The helical transmembrane segment at 129 to 152 (VPLLNTSVLLASGVSITWAHHSLM) threads the bilayer. Residues 153-155 (EGN) lie on the Mitochondrial matrix side of the membrane. A helical membrane pass occupies residues 156–183 (RKHMLQALFITISLGVYFTLLQASEYYE). Residues 184–190 (TSFTISD) lie on the Mitochondrial intermembrane side of the membrane. A helical transmembrane segment spans residues 191 to 223 (GVYGSTFFMATGFHGLHVIIGSTFLIVCFLRQL). Topologically, residues 224–232 (YYHFTSNHH) are mitochondrial matrix. Residues 233–256 (FGFEAAAWYWHFVDVVWLFLYVSI) form a helical membrane-spanning segment. Residues 257–261 (YWWGS) are Mitochondrial intermembrane-facing.

It belongs to the cytochrome c oxidase subunit 3 family. Component of the cytochrome c oxidase (complex IV, CIV), a multisubunit enzyme composed of 14 subunits. The complex is composed of a catalytic core of 3 subunits MT-CO1, MT-CO2 and MT-CO3, encoded in the mitochondrial DNA, and 11 supernumerary subunits COX4I, COX5A, COX5B, COX6A, COX6B, COX6C, COX7A, COX7B, COX7C, COX8 and NDUFA4, which are encoded in the nuclear genome. The complex exists as a monomer or a dimer and forms supercomplexes (SCs) in the inner mitochondrial membrane with NADH-ubiquinone oxidoreductase (complex I, CI) and ubiquinol-cytochrome c oxidoreductase (cytochrome b-c1 complex, complex III, CIII), resulting in different assemblies (supercomplex SCI(1)III(2)IV(1) and megacomplex MCI(2)III(2)IV(2)).

It is found in the mitochondrion inner membrane. The enzyme catalyses 4 Fe(II)-[cytochrome c] + O2 + 8 H(+)(in) = 4 Fe(III)-[cytochrome c] + 2 H2O + 4 H(+)(out). Functionally, component of the cytochrome c oxidase, the last enzyme in the mitochondrial electron transport chain which drives oxidative phosphorylation. The respiratory chain contains 3 multisubunit complexes succinate dehydrogenase (complex II, CII), ubiquinol-cytochrome c oxidoreductase (cytochrome b-c1 complex, complex III, CIII) and cytochrome c oxidase (complex IV, CIV), that cooperate to transfer electrons derived from NADH and succinate to molecular oxygen, creating an electrochemical gradient over the inner membrane that drives transmembrane transport and the ATP synthase. Cytochrome c oxidase is the component of the respiratory chain that catalyzes the reduction of oxygen to water. Electrons originating from reduced cytochrome c in the intermembrane space (IMS) are transferred via the dinuclear copper A center (CU(A)) of subunit 2 and heme A of subunit 1 to the active site in subunit 1, a binuclear center (BNC) formed by heme A3 and copper B (CU(B)). The BNC reduces molecular oxygen to 2 water molecules using 4 electrons from cytochrome c in the IMS and 4 protons from the mitochondrial matrix. In Canis lupus (Gray wolf), this protein is Cytochrome c oxidase subunit 3 (MT-CO3).